A 654-amino-acid polypeptide reads, in one-letter code: Tetratricopeptide repeat protein 30 homolog (654 aa).

TPR repeat units follow at residues 10–43 (EGHVTRTIYNLIKDKRYEDVIECITNIGEAANTR), 44–76 (AGLSTLGHCYYHAQKYEEAATCYEQLCQLAPKE), 143–176 (ADTLNDEGCLLYQADQHESAVQRFQAALQVGGFN), 178–210 (LVAYNVALAHFQRKQRAQALDYTSEIVERGVRN), 384–417 (LAAKVQEVRATNEQHALRDALKDYEQALELYLPV), 449–483 (AVWRLNAGHVLFMQGDKYNEAAAFYEPIVRQHSDD), and 533–566 (CIVNLVVGTLYCAKSNYEFGLTRIAHALEGGAGG).

This sequence belongs to the TTC30/dfy-1/fleer family.

The protein localises to the cell projection. It localises to the cilium. Functionally, required for polyglutamylation of axonemal tubulin in sensory cilia. Plays a role in anterograde intraflagellar transport (IFT), the process by which cilia precursors are transported from the base of the cilium to the site of their incorporation at the tip. The chain is Tetratricopeptide repeat protein 30 homolog from Drosophila pseudoobscura pseudoobscura (Fruit fly).